A 301-amino-acid polypeptide reads, in one-letter code: Ribonuclease Z (301 aa).

Zn(2+)-binding residues include His-61, His-63, Asp-65, His-66, His-140, Asp-211, and His-269. Asp-65 serves as the catalytic Proton acceptor.

It belongs to the RNase Z family. In terms of assembly, homodimer. Zn(2+) is required as a cofactor.

The enzyme catalyses Endonucleolytic cleavage of RNA, removing extra 3' nucleotides from tRNA precursor, generating 3' termini of tRNAs. A 3'-hydroxy group is left at the tRNA terminus and a 5'-phosphoryl group is left at the trailer molecule.. Zinc phosphodiesterase, which displays some tRNA 3'-processing endonuclease activity. Probably involved in tRNA maturation, by removing a 3'-trailer from precursor tRNA. The sequence is that of Ribonuclease Z from Bradyrhizobium diazoefficiens (strain JCM 10833 / BCRC 13528 / IAM 13628 / NBRC 14792 / USDA 110).